The primary structure comprises 380 residues: N-acetylaspartylglutamate synthase A (380 aa).

One can recognise an ATP-grasp domain in the interval 115-300 (FQELAGHGVP…VGAIIADYAM (186 aa)). Residues Lys154, 189–199 (QKYVKESHGKD), and Arg215 contribute to the ATP site. The Mg(2+) site is built by Asp260, Glu273, and Asn275. Mn(2+) is bound by residues Asp260, Glu273, and Asn275. Ser319 bears the Phosphoserine mark. Residues 345 to 370 (GSTSSESEPELGEARDSSVKTMGAPP) form a disordered region.

It belongs to the RimK family. Mg(2+) serves as cofactor. Mn(2+) is required as a cofactor. As to expression, highly expressed in spinal cord and brain.

The protein localises to the cytoplasm. The enzyme catalyses N-acetyl-L-aspartate + L-glutamate + ATP = N-acetyl-L-aspartyl-L-glutamate + ADP + phosphate + H(+). It catalyses the reaction N-acetyl-L-aspartate + 2 L-glutamate + 2 ATP = N-acetyl-L-aspartyl-L-glutamyl-L-glutamate + 2 ADP + 2 phosphate + 2 H(+). Functionally, catalyzes the synthesis of N-acetyl-L-aspartyl-L-glutamate (NAAG) and N-acetyl-L-aspartyl-L-glutamyl-L-glutamate. The protein is N-acetylaspartylglutamate synthase A (Rimkla) of Mus musculus (Mouse).